A 128-amino-acid chain; its full sequence is Translation initiation factor 5A (128 aa).

At K35 the chain carries Hypusine.

This sequence belongs to the eIF-5A family.

The protein localises to the cytoplasm. Functions by promoting the formation of the first peptide bond. This Methanosarcina mazei (strain ATCC BAA-159 / DSM 3647 / Goe1 / Go1 / JCM 11833 / OCM 88) (Methanosarcina frisia) protein is Translation initiation factor 5A (eif5a).